The following is a 1182-amino-acid chain: Tyrosine-protein kinase ABL2 (1182 aa).

Disordered regions lie at residues 1 to 47 (MGQQ…TGFN) and 60 to 80 (EDGFEGDKTGGSSPEALHRPY). Residue G2 is the site of N-myristoyl glycine attachment. Residues 2–106 (GQQVGRVGEA…SKENLLGATE (105 aa)) are CAP. Low complexity predominate over residues 20–30 (RGIRGSSAARP). S97 bears the Phosphoserine mark. The SH3 domain occupies 107-167 (SDPNLFVALY…PSNYITPVNS (61 aa)). A phosphotyrosine mark is found at Y116, Y161, Y174, Y185, Y218, and Y231. The region spanning 173-263 (WYHGPVSRSA…GLVTTLHYPA (91 aa)) is the SH2 domain. At Y261 the chain carries Phosphotyrosine; by ABL1 and autocatalysis. Y272 carries the phosphotyrosine; by autocatalysis modification. S275 is subject to Phosphoserine. In terms of domain architecture, Protein kinase spans 288 to 539 (ITMKHKLGGG…PSFAETHQAF (252 aa)). Residue 294-302 (LGGGQYGEV) participates in ATP binding. Phosphotyrosine is present on residues Y299 and Y303. ATP-binding positions include K317 and 362–368 (EYMPYGN). D409 functions as the Proton acceptor in the catalytic mechanism. The short motif at 427–451 (DFGLSRLMTGDTYTAHAGAKFPIKW) is the Kinase activation loop element. Y439 carries the post-translational modification Phosphotyrosine; by autocatalysis and SRC-type Tyr-kinases. Y459 carries the phosphotyrosine modification. Position 568 is a phosphotyrosine; by autocatalysis (Y568). The tract at residues 611-641 (IRGAQASSGSPALPRKQRDKSPSSLLEDAKE) is disordered. A phosphoserine mark is found at S620, S631, and S633. D647 carries the phosphotyrosine modification. Positions 654 to 674 (SSFMKKRNAPTPPKRSSSFRE) are disordered. S655 is modified (phosphoserine). The short motif at 658–660 (KKR) is the Nuclear localization signal element. A phosphotyrosine mark is found at A662 and R668. Phosphoserine is present on residues S669, S670, and S671. Y683 and Y718 each carry phosphotyrosine. Y683 carries the phosphotyrosine; by autocatalysis modification. The interval 694 to 930 (SLQHADGFSF…PVLPTTHNHK (237 aa)) is F-actin-binding. The interval 763 to 794 (LRAGKPTASDDTSKPFPRSNSTSSMSSGLPEQ) is disordered. K776 is subject to N6-acetyllysine. Positions 780 to 791 (RSNSTSSMSSGL) are enriched in polar residues. S783 carries the post-translational modification Phosphoserine. T800 bears the Phosphothreonine mark. The span at 807-823 (RSKLQLERTVSTSSQPE) shows a compositional bias: polar residues. Residues 807–851 (RSKLQLERTVSTSSQPEENVDRANDMLPKKSEESAAPSRERPKAK) are disordered. 2 positions are modified to phosphoserine: S817 and S820. Basic and acidic residues predominate over residues 825-849 (NVDRANDMLPKKSEESAAPSRERPK). 2 positions are modified to phosphoserine: S915 and S936. Positions 964 to 1024 (HQVTSSGDKD…TSETQEGGKK (61 aa)) are disordered. A compositionally biased stretch (polar residues) spans 1010–1019 (TAGQSTSETQ). Positions 1020-1182 (EGGKKAALGA…VQEISDVVQR (163 aa)) are F-actin-binding.

Belongs to the protein kinase superfamily. Tyr protein kinase family. ABL subfamily. In terms of assembly, interacts with PSMA7. Interacts with CTTN. Found in a complex with ABL1, ABL2, CRK and UNC119; leading to the inhibition of CRK phosphorylation by ABL kinases. Requires Mg(2+) as cofactor. Mn(2+) is required as a cofactor. In terms of processing, phosphorylated at Tyr-261 by ABL1 in response to oxidative stress. Phosphorylated by PDGFRB. Polyubiquitinated. Polyubiquitination of ABL2 leads to degradation. In terms of tissue distribution, widely expressed.

It localises to the cytoplasm. The protein resides in the cytoskeleton. It carries out the reaction L-tyrosyl-[protein] + ATP = O-phospho-L-tyrosyl-[protein] + ADP + H(+). Its activity is regulated as follows. Stabilized in the inactive form by an association between the SH3 domain and the SH2-TK linker region, interactions of the N-terminal cap, and contributions from an N-terminal myristoyl group and phospholipids. Activated by autophosphorylation as well as by SRC-family kinase-mediated phosphorylation. Activated by RIN1 binding to the SH2 and SH3 domains. Inhibited by imatinib mesylate (Gleevec) which is used for the treatment of chronic myeloid leukemia (CML). Phosphatidylinositol 4,5-bisphosphate (PIP2), a highly abundant phosphoinositide known to regulate cytoskeletal and membrane proteins, inhibits the tyrosine kinase activity. Functionally, non-receptor tyrosine-protein kinase that plays an ABL1-overlapping role in key processes linked to cell growth and survival such as cytoskeleton remodeling in response to extracellular stimuli, cell motility and adhesion and receptor endocytosis. Coordinates actin remodeling through tyrosine phosphorylation of proteins controlling cytoskeleton dynamics like MYH10 (involved in movement); CTTN (involved in signaling); or TUBA1 and TUBB (microtubule subunits). Binds directly F-actin and regulates actin cytoskeletal structure through its F-actin-bundling activity. Involved in the regulation of cell adhesion and motility through phosphorylation of key regulators of these processes such as CRK, CRKL, DOK1 or ARHGAP35. Adhesion-dependent phosphorylation of ARHGAP35 promotes its association with RASA1, resulting in recruitment of ARHGAP35 to the cell periphery where it inhibits RHO. Phosphorylates multiple receptor tyrosine kinases like PDGFRB and other substrates which are involved in endocytosis regulation such as RIN1. In brain, may regulate neurotransmission by phosphorylating proteins at the synapse. ABL2 also acts as a regulator of multiple pathological signaling cascades during infection. Pathogens can highjack ABL2 kinase signaling to reorganize the host actin cytoskeleton for multiple purposes, like facilitating intracellular movement and host cell exit. Finally, functions as its own regulator through autocatalytic activity as well as through phosphorylation of its inhibitor, ABI1. Positively regulates chemokine-mediated T-cell migration, polarization, and homing to lymph nodes and immune-challenged tissues, potentially via activation of NEDD9/HEF1 and RAP1. In Homo sapiens (Human), this protein is Tyrosine-protein kinase ABL2 (ABL2).